Reading from the N-terminus, the 274-residue chain is MDPSLLLDQMLQDVSNLPAEFRYMLEEVGLEDEQCLELRKRYQQKEGILHKYIKQNGSLAANPKEDELLAEVEQSMAQVRELQEEKCQRANTILFLVSRHLNKLQQNIIMLEEDGLLAPAEDEMESGPDFSRESSVVGSTVSERKRKAASEDHPRRKKQSRSMSNTHREKSYNKGDDTADVKSPASTEREGTLDLQNYQEELFSSMNDNEKEDQNLYCFCQRVSFGEMVACDGPNCKYEWFHYECVNLTEPPKGTWYCPDCKQEMSKKLKKKKQ.

Positions 121–194 are disordered; it reads EDEMESGPDF…ASTEREGTLD (74 aa). Residues 166 to 180 are compositionally biased toward basic and acidic residues; it reads THREKSYNKGDDTAD. A PHD-type zinc finger spans residues 215–264; it reads NLYCFCQRVSFGEMVACDGPNCKYEWFHYECVNLTEPPKGTWYCPDCKQE. The Zn(2+) site is built by Cys-218, Cys-220, Cys-231, Cys-236, His-242, Cys-245, Cys-258, and Cys-261.

Belongs to the ING family. As to quaternary structure, interacts with H3K4me3 and to a lesser extent with H3K4me2. Component of the NuA4 histone acetyltransferase complex.

The protein localises to the nucleus. In terms of biological role, component of the NuA4 histone acetyltransferase complex which is involved in transcriptional activation of selected genes principally by acetylation of nucleosomal histone H4 and H2A. The NuA4 complex is also involved in DNA repair. Involved in cell cycle progression and meiosis. This Candida glabrata (strain ATCC 2001 / BCRC 20586 / JCM 3761 / NBRC 0622 / NRRL Y-65 / CBS 138) (Yeast) protein is Chromatin modification-related protein YNG2 (YNG2).